The sequence spans 204 residues: Tumor necrosis factor alpha-induced protein 8-like protein 3 (204 aa).

The segment covering 1 to 10 (MDSDSGEQSE) has biased composition (acidic residues). Residues 1–20 (MDSDSGEQSEGEPGTAAGPH) form a disordered region. Residues 21–204 (VFSSKNLALQ…INKLLDDKIL (184 aa)) are binding to phosphoinositides.

Belongs to the TNFAIP8 family. Widely expressed (at protein level).

The protein resides in the cytoplasm. The protein localises to the cell membrane. Its function is as follows. Acts as a lipid transfer protein. Preferentially captures and shuttles two lipid second messengers, i.e., phosphatidylinositol 4,5- bisphosphate and phosphatidylinositol 3,4,5-trisphosphate and increases their levels in the plasma membrane. Additionally, may also function as a lipid-presenting protein to enhance the activity of the PI3K-AKT and MEK-ERK pathways. May act as a regulator of tumorigenesis through its activation of phospholipid signaling. This is Tumor necrosis factor alpha-induced protein 8-like protein 3 (Tnfaip8l3) from Mus musculus (Mouse).